The sequence spans 165 residues: Myosin regulatory light chain 2, ventricular/cardiac muscle isoform (165 aa).

Ser2 is modified (n,N,N-trimethylserine). Asn14 carries the post-translational modification Deamidated asparagine. Phosphoserine occurs at positions 15 and 19. EF-hand domains follow at residues 24–59, 94–129, and 130–165; these read TQIQ…LGRV, DPEE…QAER, and FSKD…GEEK. Ca(2+) is bound by residues Asp37, Asn39, Asp41, and Asp48. Phosphothreonine is present on Thr52.

In terms of assembly, myosin is a hexamer of 2 heavy chains and 4 light chains. Interacts with MYOC. In terms of processing, N-terminus is methylated by METTL11A/NTM1. Post-translationally, phosphorylated by MYLK3 and MYLK2; promotes cardiac muscle contraction and function. Dephosphorylated by PPP1CB complexed to PPP1R12B. The phosphorylated form in adult is expressed as gradients across the heart from endocardium (low phosphorylation) to epicardium (high phosphorylation); regulates cardiac torsion and workload distribution.

The protein localises to the cytoplasm. It is found in the myofibril. It localises to the sarcomere. Its subcellular location is the a band. Functionally, contractile protein that plays a role in heart development and function. Following phosphorylation, plays a role in cross-bridge cycling kinetics and cardiac muscle contraction by increasing myosin lever arm stiffness and promoting myosin head diffusion; as a consequence of the increase in maximum contraction force and calcium sensitivity of contraction force. These events altogether slow down myosin kinetics and prolong duty cycle resulting in accumulated myosins being cooperatively recruited to actin binding sites to sustain thin filament activation as a means to fine-tune myofilament calcium sensitivity to force. During cardiogenesis plays an early role in cardiac contractility by promoting cardiac myofibril assembly. The chain is Myosin regulatory light chain 2, ventricular/cardiac muscle isoform from Oryctolagus cuniculus (Rabbit).